A 248-amino-acid chain; its full sequence is Triosephosphate isomerase (248 aa).

A substrate-binding site is contributed by 9-11 (NWK). The active-site Electrophile is H92. E164 serves as the catalytic Proton acceptor. Substrate-binding positions include G170, S210, and 231–232 (GG).

Belongs to the triosephosphate isomerase family. As to quaternary structure, homodimer.

It is found in the cytoplasm. It catalyses the reaction D-glyceraldehyde 3-phosphate = dihydroxyacetone phosphate. It functions in the pathway carbohydrate biosynthesis; gluconeogenesis. Its pathway is carbohydrate degradation; glycolysis; D-glyceraldehyde 3-phosphate from glycerone phosphate: step 1/1. Functionally, involved in the gluconeogenesis. Catalyzes stereospecifically the conversion of dihydroxyacetone phosphate (DHAP) to D-glyceraldehyde-3-phosphate (G3P). The chain is Triosephosphate isomerase from Mycoplasma capricolum subsp. capricolum (strain California kid / ATCC 27343 / NCTC 10154).